A 247-amino-acid polypeptide reads, in one-letter code: Mitochondrial inner membrane protease ATP23 (247 aa).

Residues 1 to 21 (MSVPPPPKEDLIKPNPPKSES) form a disordered region. His144 provides a ligand contact to a divalent metal cation. Glu145 is a catalytic residue. Position 148 (His148) interacts with a divalent metal cation.

The protein belongs to the peptidase M76 family.

It is found in the mitochondrion inner membrane. In terms of biological role, has a dual role in the assembly of mitochondrial ATPase. Acts as a protease that removes N-terminal residues of mitochondrial ATPase CF(0) subunit 6 at the intermembrane space side. Also involved in the correct assembly of the membrane-embedded ATPase CF(0) particle, probably mediating association of subunit 6 with the subunit 9 ring. The chain is Mitochondrial inner membrane protease ATP23 (ATP23) from Kluyveromyces lactis (strain ATCC 8585 / CBS 2359 / DSM 70799 / NBRC 1267 / NRRL Y-1140 / WM37) (Yeast).